The sequence spans 580 residues: DNA mismatch repair protein MutL (580 aa).

This sequence belongs to the DNA mismatch repair MutL/HexB family.

In terms of biological role, this protein is involved in the repair of mismatches in DNA. It is required for dam-dependent methyl-directed DNA mismatch repair. May act as a 'molecular matchmaker', a protein that promotes the formation of a stable complex between two or more DNA-binding proteins in an ATP-dependent manner without itself being part of a final effector complex. In Chlamydia caviae (strain ATCC VR-813 / DSM 19441 / 03DC25 / GPIC) (Chlamydophila caviae), this protein is DNA mismatch repair protein MutL.